The chain runs to 140 residues: Large ribosomal subunit protein bL17 (140 aa).

Belongs to the bacterial ribosomal protein bL17 family. As to quaternary structure, part of the 50S ribosomal subunit. Contacts protein L32.

This Gluconobacter oxydans (strain 621H) (Gluconobacter suboxydans) protein is Large ribosomal subunit protein bL17.